The sequence spans 245 residues: tRNA1(Val) (adenine(37)-N6)-methyltransferase (245 aa).

Belongs to the methyltransferase superfamily. tRNA (adenine-N(6)-)-methyltransferase family.

The protein resides in the cytoplasm. It carries out the reaction adenosine(37) in tRNA1(Val) + S-adenosyl-L-methionine = N(6)-methyladenosine(37) in tRNA1(Val) + S-adenosyl-L-homocysteine + H(+). Functionally, specifically methylates the adenine in position 37 of tRNA(1)(Val) (anticodon cmo5UAC). The sequence is that of tRNA1(Val) (adenine(37)-N6)-methyltransferase from Salmonella typhi.